Reading from the N-terminus, the 123-residue chain is Large ribosomal subunit protein bL12 (123 aa).

The protein belongs to the bacterial ribosomal protein bL12 family. In terms of assembly, homodimer. Part of the ribosomal stalk of the 50S ribosomal subunit. Forms a multimeric L10(L12)X complex, where L10 forms an elongated spine to which 2 to 4 L12 dimers bind in a sequential fashion. Binds GTP-bound translation factors.

Functionally, forms part of the ribosomal stalk which helps the ribosome interact with GTP-bound translation factors. Is thus essential for accurate translation. The chain is Large ribosomal subunit protein bL12 from Finegoldia magna (strain ATCC 29328 / DSM 20472 / WAL 2508) (Peptostreptococcus magnus).